Consider the following 391-residue polypeptide: Chaperone protein DnaJ (391 aa).

One can recognise a J domain in the interval 6–70; it reads DYYEILEVSR…EKRKLYDTYG (65 aa). The CR-type zinc finger occupies 145–226; it reads GCIKNVKYTR…CKSRRMVDEV (82 aa). Cys-158, Cys-161, Cys-174, Cys-177, Cys-200, Cys-203, Cys-214, and Cys-217 together coordinate Zn(2+). 4 CXXCXGXG motif repeats span residues 158 to 165, 174 to 181, 200 to 207, and 214 to 221; these read CPDCNGSG, CSDCNGEG, CPSCKGEG, and CKKCKSRR.

The protein belongs to the DnaJ family. Homodimer. It depends on Zn(2+) as a cofactor.

It is found in the cytoplasm. Participates actively in the response to hyperosmotic and heat shock by preventing the aggregation of stress-denatured proteins and by disaggregating proteins, also in an autonomous, DnaK-independent fashion. Unfolded proteins bind initially to DnaJ; upon interaction with the DnaJ-bound protein, DnaK hydrolyzes its bound ATP, resulting in the formation of a stable complex. GrpE releases ADP from DnaK; ATP binding to DnaK triggers the release of the substrate protein, thus completing the reaction cycle. Several rounds of ATP-dependent interactions between DnaJ, DnaK and GrpE are required for fully efficient folding. Also involved, together with DnaK and GrpE, in the DNA replication of plasmids through activation of initiation proteins. In Mycoplasmoides gallisepticum (strain R(low / passage 15 / clone 2)) (Mycoplasma gallisepticum), this protein is Chaperone protein DnaJ.